The sequence spans 2224 residues: Protein sidekick (2224 aa).

The signal sequence occupies residues 1 to 47 (MLKSAASSLRRRRPKTTITATLAIEMPSQPKLASLLAVLVLLCYCDS). Topologically, residues 48–2001 (CFFCYADANL…LQHKPFYRQT (1954 aa)) are extracellular. Residues 72–155 (PRFTTHPSSS…SIFSEKSDVV (84 aa)) form the Ig-like C2-type 1 domain. A disulfide bond links cysteine 95 and cysteine 138. 4 N-linked (GlcNAc...) asparagine glycosylation sites follow: asparagine 164, asparagine 250, asparagine 318, and asparagine 327. Ig-like C2-type domains are found at residues 261–355 (PEII…ARLQ), 359–445 (PPLF…NSAS), 455–541 (PIME…AYLS), and 546–636 (TQII…ARLS). Disulfide bonds link cysteine 283–cysteine 336 and cysteine 382–cysteine 433. N-linked (GlcNAc...) asparagine glycosylation is found at asparagine 463, asparagine 485, and asparagine 491. 2 cysteine pairs are disulfide-bonded: cysteine 476–cysteine 525 and cysteine 567–cysteine 620. Asparagine 628, asparagine 661, asparagine 707, asparagine 809, asparagine 870, asparagine 942, asparagine 1019, asparagine 1094, asparagine 1109, asparagine 1172, asparagine 1203, asparagine 1282, asparagine 1329, asparagine 1379, asparagine 1414, and asparagine 1420 each carry an N-linked (GlcNAc...) asparagine glycan. Fibronectin type-III domains are found at residues 643-753 (PPSN…LPQE), 758-855 (PPVG…TKEG), 860-967 (PPTN…TMDD), 971-1065 (EVTG…VEPV), 1069-1164 (APTA…TIQA), 1169-1270 (PPFN…TREA), 1275-1372 (GPLD…TFED), 1376-1469 (VPSN…TNNR), 1474-1570 (APSV…TLPA), 1575-1677 (GVGG…VGEA), 1682-1785 (EPRA…TLPG), 1789-1883 (APLH…GPQD), and 1885-1984 (SPVA…TPSK). N-linked (GlcNAc...) asparagine glycans are attached at residues asparagine 1843 and asparagine 1876. Residues 2002–2022 (WFMVSLAATSIVIIVMVIAVL) form a helical membrane-spanning segment. The Cytoplasmic portion of the chain corresponds to 2023 to 2224 (CVKSKSYKYK…APLPGFSSFV (202 aa)). Disordered stretches follow at residues 2068–2157 (TLNS…RSDP) and 2171–2195 (LRQS…PEGS). The residue at position 2071 (serine 2071) is a Phosphoserine. A compositionally biased stretch (low complexity) spans 2073–2085 (GTLRSGTLGTLGR). Residue threonine 2074 is modified to Phosphothreonine. Composition is skewed to basic and acidic residues over residues 2112 to 2122 (HSDEESLKCYD) and 2144 to 2157 (QHSE…RSDP). Serine 2113 and serine 2117 each carry phosphoserine.

This sequence belongs to the sidekick family.

It is found in the membrane. Participates in homotypic or heterotypic interactions in the eye during pattern formation to prevent extra cells from joining the precluster and differentiating as photoreceptor cells. The chain is Protein sidekick from Drosophila melanogaster (Fruit fly).